We begin with the raw amino-acid sequence, 2593 residues long: Citrinin polyketide synthase (2593 aa).

An N-terminal acylcarrier protein transacylase domain (SAT) region spans residues 70 to 224; the sequence is KLLENLNAWI…YVSVIVDQRR (155 aa). Cys139 acts as the Nucleophile; for transacylase activity in catalysis. The Proton donor/acceptor; for transacylase activity role is filled by His258. Residues 391–806 enclose the Ketosynthase family 3 (KS3) domain; the sequence is DERIAVIGMA…GSNASMVVTQ (416 aa). Residues Cys555, His690, and His729 each act as for beta-ketoacyl synthase activity in the active site. A malonyl-CoA:ACP transacylase (MAT) domain region spans residues 906-1191; that stretch reads PDPKPVILCF…VAIWLEAGSN (286 aa). Residues 1291 to 1424 are N-terminal hotdog fold; the sequence is PKGLTTFVGY…GTITFQAADS (134 aa). The PKS/mFAS DH domain maps to 1291 to 1603; it reads PKGLTTFVGY…YQKVSISGIR (313 aa). The segment at 1322–1601 is product template (PT) domain; it reads LLSGHIMANA…ISYQKVSISG (280 aa). The active-site Proton acceptor; for dehydratase activity is the His1326. The tract at residues 1451–1603 is C-terminal hotdog fold; it reads VADDILQGRN…YQKVSISGIR (153 aa). Residue Asp1508 is the Proton donor; for dehydratase activity of the active site. The interval 1636–1662 is disordered; sequence VADSPLVDGSSTAVSGTPPTKKAPKAP. Positions 1661-1738 constitute a Carrier domain; it reads APSVDITGKM…SLVECMQRIL (78 aa). Ser1689 carries the O-(pantetheine 4'-phosphoryl)serine modification. Active-site for methyltransferase activity residues include Tyr1955, His2067, and Glu2093. Residues 1960-2134 are methyltransferase (CMeT) domain; it reads INAVWIQQAE…ATHWKKILTS (175 aa). Positions 2215–2459 are NADPH-binding (R) domain; that stretch reads PAPTGHCVLV…KALPDFDGSL (245 aa).

It depends on pantetheine 4'-phosphate as a cofactor.

It participates in mycotoxin biosynthesis. Non-reducing polyketide synthase; part of the gene cluster that mediates the biosynthesis of the mycotoxin citrinin, a hepato-nephrotoxic compound to humans due to inhibition of respiration complex III. The pathway begins with the synthesis of a keto-aldehyde intermediate by the citrinin PKS (pksCT) from successive condensations of 4 malonyl-CoA units, presumably with a simple acetyl-CoA starter unit. Release of the keto-aldehyde intermediate is consistent with the presence of the C-terminal reductive release domain. Mp11 collaborates with pksCT by catalyzing the hydrolysis of ACP-bound acyl intermediates to free the ACP from stalled intermediates. Mpl2 then catalyzes the oxidation of the C-12 methyl of the ketone intermediate to an alcohol intermediate which is further oxidized by the oxidoreductase mpl7 to produce a bisaldehyde intermediate. The fourth catalytic step is catalyzed by the mpl4 aldehyde dehydrogenase. The final transformation is the reduction of C-3 by mpl6 to provide the chemically stable citrinin nucleus. The protein is Citrinin polyketide synthase of Monascus purpureus (Red mold).